Consider the following 72-residue polypeptide: Translation initiation factor IF-1 (72 aa).

The S1-like domain maps to 1–72 (MSKEDLIEFT…SKGRITFRFK (72 aa)).

It belongs to the IF-1 family. Component of the 30S ribosomal translation pre-initiation complex which assembles on the 30S ribosome in the order IF-2 and IF-3, IF-1 and N-formylmethionyl-tRNA(fMet); mRNA recruitment can occur at any time during PIC assembly.

It is found in the cytoplasm. One of the essential components for the initiation of protein synthesis. Stabilizes the binding of IF-2 and IF-3 on the 30S subunit to which N-formylmethionyl-tRNA(fMet) subsequently binds. Helps modulate mRNA selection, yielding the 30S pre-initiation complex (PIC). Upon addition of the 50S ribosomal subunit IF-1, IF-2 and IF-3 are released leaving the mature 70S translation initiation complex. The sequence is that of Translation initiation factor IF-1 from Gluconobacter oxydans (strain 621H) (Gluconobacter suboxydans).